We begin with the raw amino-acid sequence, 646 residues long: Choline transporter-like protein 1 (646 aa).

Residues 1–27 lie on the Cytoplasmic side of the membrane; the sequence is MGCCGCGSEEGSVRQWKPLEQRSCTDV. Residues 28 to 48 form a helical membrane-spanning segment; that stretch reads LWLLIFVLFCIGMAIICGFAI. Residues 49-207 are Extracellular-facing; the sequence is ASGAAQRLVF…RVITGVMTSK (159 aa). The N-linked (GlcNAc...) asparagine glycan is linked to Asn-133. The helical transmembrane segment at 208–228 threads the bilayer; sequence EIIVGLCLMSLVLSILLMVII. Residues 229–233 lie on the Cytoplasmic side of the membrane; that stretch reads RYISK. A helical membrane pass occupies residues 234-254; that stretch reads VLVWILAILTIIGSIGGTAVL. At 255-281 the chain is on the extracellular side; the sequence is WWLYADHKKTLKLDPSQGDVAADNVTA. An N-linked (GlcNAc...) asparagine glycan is attached at Asn-278. The chain crosses the membrane as a helical span at residues 282-302; the sequence is LLVCAIIATVITVILLLLMLI. Residues 303–308 are Cytoplasmic-facing; the sequence is MRKRVA. A helical membrane pass occupies residues 309-329; the sequence is LTIALFHVAGKVFIHIPFLIF. Topologically, residues 330 to 331 are extracellular; sequence QS. The helical transmembrane segment at 332–352 threads the bilayer; sequence LWTFLALAFFWIYWIAVLLLL. At 353 to 373 the chain is on the cytoplasmic side; that stretch reads ATAGYPQKKDQGYVEFKVSGP. A helical membrane pass occupies residues 374 to 394; the sequence is LQYTWIYHLVGLIWISEFILA. The Extracellular segment spans residues 395 to 435; it reads CQQMTIAGAVVTYYFTRDKHNLPATPILASMCRLIKYHLGT. Residues 436–456 form a helical membrane-spanning segment; it reads VAKGSFIITLIKIPQMILVYI. Over 457–530 the chain is Cytoplasmic; the sequence is HSQLKGKENA…RVAAINTVGD (74 aa). The chain crosses the membrane as a helical span at residues 531-551; sequence FVLFLGKLLIVLVTGFVGIIL. At 552–559 the chain is on the extracellular side; that stretch reads LNYQRDYT. The helical transmembrane segment at 560–580 threads the bilayer; that stretch reads VWVLPLIIICLFAFFVSHCFL. Topologically, residues 581–646 are cytoplasmic; the sequence is SIYEMVVDVL…KSMASGSDNA (66 aa).

It belongs to the CTL (choline transporter-like) family. As to expression, present in myelinated structures from brain and spinal cord (at protein level).

The protein resides in the cell membrane. Its subcellular location is the mitochondrion outer membrane. It catalyses the reaction choline(out) + n H(+)(in) = choline(in) + n H(+)(out). The catalysed reaction is ethanolamine(out) + n H(+)(in) = ethanolamine(in) + n H(+)(out). In terms of biological role, probable choline transporter. May be involved in membrane synthesis and myelin production. In Torpedo marmorata (Marbled electric ray), this protein is Choline transporter-like protein 1 (slc44a1).